The following is a 1938-amino-acid chain: Myosin-1 (1938 aa).

A disordered region spans residues 1 to 27 (MSLEHEKDPGWQYLKRSREQQLADQSR). Positions 16 to 27 (RSREQQLADQSR) are enriched in basic and acidic residues. Residues 30 to 80 (DSKKNVWIPDAEEGYIEGVIKGPGPKADTVIVTAGGKDVTLKKDIVQEVNP) enclose the Myosin N-terminal SH3-like domain. In terms of domain architecture, Myosin motor spans 84 to 785 (EKTEDMSNLT…VVAHIEDLRD (702 aa)). Lys-128 is modified (N6,N6,N6-trimethyllysine). Residue 177–184 (GESGAGKT) coordinates ATP. Actin-binding stretches follow at residues 660–682 (LNKL…IPNE) and 764–778 (RIGH…GVVA). The tract at residues 846–1170 (QLKCGKMAEE…NKQLEIQQDN (325 aa)) is alpha-helical tailpiece (short S2). The rodlike tail (S2 and LMM domains) stretch occupies residues 846–1938 (QLKCGKMAEE…GQVVRSATNK (1093 aa)). A coiled-coil region spans residues 846-1938 (QLKCGKMAEE…GQVVRSATNK (1093 aa)). Positions 919–951 (RQEVEKSLNDANDRLSEHEEKNADLEKQRRKAQ) are disordered. Over residues 920 to 951 (QEVEKSLNDANDRLSEHEEKNADLEKQRRKAQ) the composition is skewed to basic and acidic residues. The light meromyosin (LMM) stretch occupies residues 1171 to 1938 (NKKKDSEIIK…GQVVRSATNK (768 aa)).

It belongs to the TRAFAC class myosin-kinesin ATPase superfamily. Myosin family. Muscle myosin is a hexameric protein that consists of 2 heavy chain subunits (MHC), 2 alkali light chain subunits (MLC) and 2 regulatory light chain subunits (MLC-2). Interacts with itr-1 (via c-terminal coiled coil domain). In terms of tissue distribution, found exclusively in the pharyngeal muscle.

Its subcellular location is the cytoplasm. It localises to the myofibril. In terms of biological role, muscle contraction. The polypeptide is Myosin-1 (Caenorhabditis elegans).